Reading from the N-terminus, the 498-residue chain is MTEDIRVRYAPSPTGHLHIGNARTAIFNWLFARHYNGKFIIRIEDTDSARNIADGEKSQLENLAWLGLDWDESPEKPGEYGPYRQSERNEQGIYQPFIDKLLTEGLAYKSYKTSEQLASEREAQQAAKQAPHYVYEYEGLTREEREAKYAEFEAKGLKPVVRFRVPEEKTYAWDDIVKGHIEIGAKEVGGDWVIQKADGMPTYNFAVVVDDHMMKISHVLRGDDHVSNTPKQMMIFEALGWDIPQFGHMALIINGETGKKLSKRDENVLQFVEQYKALGYQPQAMVNFIGLLGWSPKGEDEIFSLEEFKQMFDETRLSKANAKFDQKKLEWINNQWMRRDLEEIMPQLIQELVTANLVSPADATAKADWLAQVIKVAGVEGISYTREIVDLVRQPFFELGDITDEMVAYLTSEEGRRVFDAWESAYIALPDDATAEDYLNAIRGIQNQLEIKGRNLWNPIRIATTHEVQGPNLPEMLVVLDKATVLQTMADVKSNYLN.

Positions 11 to 21 match the 'HIGH' region motif; it reads PSPTGHLHIGN. Residues 260–264 carry the 'KMSKS' region motif; it reads KLSKR. Lysine 263 contributes to the ATP binding site.

This sequence belongs to the class-I aminoacyl-tRNA synthetase family. Glutamate--tRNA ligase type 1 subfamily. In terms of assembly, monomer.

The protein localises to the cytoplasm. It catalyses the reaction tRNA(Glu) + L-glutamate + ATP = L-glutamyl-tRNA(Glu) + AMP + diphosphate. Catalyzes the attachment of glutamate to tRNA(Glu) in a two-step reaction: glutamate is first activated by ATP to form Glu-AMP and then transferred to the acceptor end of tRNA(Glu). The sequence is that of Glutamate--tRNA ligase from Leuconostoc citreum (strain KM20).